The chain runs to 238 residues: Opacity protein opA68 (238 aa).

Residue Ala1 is a signal peptide. The interval 88-109 (NLQRRTSNGNRRDRKTENQENG) is disordered.

This sequence belongs to the opacity porin family.

It localises to the cell outer membrane. Functionally, implicated in a number of adherence functions. OPA proteins are implicated in pathogenesis and are subject to phase variation. The chain is Opacity protein opA68 from Neisseria gonorrhoeae.